The following is a 317-amino-acid chain: 4-diphosphocytidyl-2-C-methyl-D-erythritol kinase (317 aa).

The active site involves lysine 17. 109–119 (PVAGGMGGGSA) serves as a coordination point for ATP. The active site involves aspartate 151.

This sequence belongs to the GHMP kinase family. IspE subfamily.

It carries out the reaction 4-CDP-2-C-methyl-D-erythritol + ATP = 4-CDP-2-C-methyl-D-erythritol 2-phosphate + ADP + H(+). It participates in isoprenoid biosynthesis; isopentenyl diphosphate biosynthesis via DXP pathway; isopentenyl diphosphate from 1-deoxy-D-xylulose 5-phosphate: step 3/6. In terms of biological role, catalyzes the phosphorylation of the position 2 hydroxy group of 4-diphosphocytidyl-2C-methyl-D-erythritol. This chain is 4-diphosphocytidyl-2-C-methyl-D-erythritol kinase, found in Paenarthrobacter aurescens (strain TC1).